Consider the following 210-residue polypeptide: Mitochondrial coenzyme A diphosphatase NUDT8 (210 aa).

A Nudix hydrolase domain is found at 25 to 172 (LRSRPAAAAV…HFSYTLPVFL (148 aa)). Lys70 is modified (N6-succinyllysine). The short motif at 70–91 (KCDPDDQDVIHTALRETQEELG) is the Nudix box element. Residues Glu85 and Glu89 each coordinate Mg(2+). An N6-succinyllysine modification is found at Lys96.

It belongs to the Nudix hydrolase family. Monomer. Mg(2+) is required as a cofactor. It depends on Mn(2+) as a cofactor. In terms of tissue distribution, expressed at the highest levels in the kidneys, heart, brown adipose tissue and liver (at protein level). Expressed at lower levels in the brain, skeletal muscle, and white adipose tissue (at protein level).

The protein resides in the mitochondrion. The enzyme catalyses an acyl-CoA + H2O = an acyl-4'-phosphopantetheine + adenosine 3',5'-bisphosphate + 2 H(+). It catalyses the reaction CoA + H2O = (R)-4'-phosphopantetheine + adenosine 3',5'-bisphosphate + 2 H(+). It carries out the reaction acetyl-CoA + H2O = S-acetyl-4'-phosphopantetheine + adenosine 3',5'-bisphosphate + 2 H(+). The catalysed reaction is butanoyl-CoA + H2O = S-butanoyl-4'-phosphopantetheine + adenosine 3',5'-bisphosphate + 2 H(+). The enzyme catalyses hexanoyl-CoA + H2O = hexanoyl-4'-phosphopantetheine + adenosine 3',5'-bisphosphate + 2 H(+). It catalyses the reaction octanoyl-CoA + H2O = S-octanoyl-4'-phosphopantetheine + adenosine 3',5'-bisphosphate + 2 H(+). It carries out the reaction propanoyl-CoA + H2O = propanoyl-4'-phosphopantetheine + adenosine 3',5'-bisphosphate + 2 H(+). The catalysed reaction is malonyl-CoA + H2O = malonyl-4'-phosphopantetheine + adenosine 3',5'-bisphosphate + 2 H(+). The enzyme catalyses succinyl-CoA + H2O = succinyl-4'-phosphopantetheine + adenosine 3',5'-bisphosphate + 2 H(+). It catalyses the reaction a 5'-end CoA-ribonucleoside in mRNA + H2O = a 5'-end phospho-adenosine-phospho-ribonucleoside in mRNA + (R)-4'-phosphopantetheine + 2 H(+). Functionally, acyl-CoA diphosphatase that mediates the hydrolysis of a wide range of CoA and CoA esters yielding 3',5'-ADP and the corresponding 4'-phosphopantetheine derivative as products. Hydrolyzes short- and medium-chain acyl-CoAs, exhibiting the highest activity toward free CoA, hexanoyl-CoA, and octanoyl-CoA and the lowest activity against acetyl-CoA. Exhibits decapping activity towards dpCoA-capped RNAs in vitro. The chain is Mitochondrial coenzyme A diphosphatase NUDT8 (Nudt8) from Mus musculus (Mouse).